Here is a 516-residue protein sequence, read N- to C-terminus: GPI mannosyltransferase 4 (516 aa).

Residues 1 to 5 (MMRYQ) are Lumenal-facing. Residues 6 to 26 (WWLYLVYAIGLMLCLGPSYIH) traverse the membrane as a helical segment. The Cytoplasmic portion of the chain corresponds to 27–60 (PDEHFQCIEILAMQFMKVKGTIPWEFKSKFAARS). The helical transmembrane segment at 61 to 81 (YGPLLLVYGPLFTILESFPEI) threads the bilayer. Topologically, residues 82–175 (QDNPALILYS…IQRSNFKNSV (94 aa)) are lumenal. The helical transmembrane segment at 176–196 (ILGLIFSFGVFNRVTFPAFIF) threads the bilayer. The Cytoplasmic segment spans residues 197-210 (LPCLILFWKFYRVH). The chain crosses the membrane as a helical span at residues 211–231 (WKSFSLLLLSFSFSSCLFVLI). Residues 232–270 (DTNIYNNGKGFVITPLNNLKYNLNVQNLQVHGLHPRYTH) are Lumenal-facing. Residues 271–291 (LLVNLPQIVGPVLLLAIFSGY) form a helical membrane-spanning segment. The Cytoplasmic portion of the chain corresponds to 292–295 (KLDK). The helical transmembrane segment at 296–316 (LSTYAIISGLLFLSFFQHQEL) threads the bilayer. Residue Arg317 is a topological domain, lumenal. A helical membrane pass occupies residues 318–338 (FLVPLVPLLVTNLNWTPLSST). At 339-348 (LVNKKIFKGT) the chain is on the cytoplasmic side. Residues 349–369 (WLLFNIIMAFIMGISHQAGII) form a helical membrane-spanning segment. At 370-516 (QFLGDYFHFR…GLTVYSIELL (147 aa)) the chain is on the lumenal side. N-linked (GlcNAc...) asparagine glycans are attached at residues Asn403 and Asn452.

This sequence belongs to the glycosyltransferase 22 family. PIGZ subfamily.

It localises to the endoplasmic reticulum membrane. The protein operates within glycolipid biosynthesis; glycosylphosphatidylinositol-anchor biosynthesis. Functionally, alpha-1,2-mannosyltransferase involved in glycosylphosphatidylinositol-anchor biosynthesis. Transfers a fourth mannose to trimannosyl-GPIs during GPI precursor assembly. The presence of a fourth mannose in GPI is essential in fungi. Involved in plasmid maintenance with SMP2. The sequence is that of GPI mannosyltransferase 4 (SMP3) from Saccharomyces cerevisiae (strain ATCC 204508 / S288c) (Baker's yeast).